Consider the following 512-residue polypeptide: Intermediate filament family orphan 2 (512 aa).

Residues 50-479 (NIHLLKGLNV…RLIKGSADRN (430 aa)) enclose the IF rod domain. The tract at residues 473 to 512 (KGSADRNSPSPSSVASSDSGSTDEIQEDLEREADVEPMVS) is disordered. Low complexity predominate over residues 480 to 492 (SPSPSSVASSDSG). The span at 496–512 (EIQEDLEREADVEPMVS) shows a compositional bias: acidic residues.

The protein belongs to the intermediate filament family.

This is Intermediate filament family orphan 2 (Iffo2) from Mus musculus (Mouse).